We begin with the raw amino-acid sequence, 302 residues long: Proline dehydrogenase 1 (302 aa).

Substrate is bound at residue Lys-95. The active site involves Asp-129. Met-130 and Gln-158 together coordinate FAD. Residue Arg-179 is part of the active site. FAD contacts are provided by residues 182 to 184 (KGA) and 221 to 222 (TH). 283 to 284 (RR) is a substrate binding site.

This sequence belongs to the proline dehydrogenase family. FAD is required as a cofactor.

It carries out the reaction L-proline + a quinone = (S)-1-pyrroline-5-carboxylate + a quinol + H(+). The protein operates within amino-acid degradation; L-proline degradation into L-glutamate; L-glutamate from L-proline: step 1/2. Converts proline to delta-1-pyrroline-5-carboxylate. The polypeptide is Proline dehydrogenase 1 (fadM) (Bacillus subtilis (strain 168)).